A 361-amino-acid polypeptide reads, in one-letter code: Phosphoserine aminotransferase (361 aa).

R43 provides a ligand contact to L-glutamate. Pyridoxal 5'-phosphate-binding positions include A77–S78, W103, T152, D172, and Q195. Residue K196 is modified to N6-(pyridoxal phosphate)lysine. Residue N237–T238 participates in pyridoxal 5'-phosphate binding.

Belongs to the class-V pyridoxal-phosphate-dependent aminotransferase family. SerC subfamily. As to quaternary structure, homodimer. Pyridoxal 5'-phosphate serves as cofactor.

The protein localises to the cytoplasm. The enzyme catalyses O-phospho-L-serine + 2-oxoglutarate = 3-phosphooxypyruvate + L-glutamate. It carries out the reaction 4-(phosphooxy)-L-threonine + 2-oxoglutarate = (R)-3-hydroxy-2-oxo-4-phosphooxybutanoate + L-glutamate. The protein operates within amino-acid biosynthesis; L-serine biosynthesis; L-serine from 3-phospho-D-glycerate: step 2/3. It functions in the pathway cofactor biosynthesis; pyridoxine 5'-phosphate biosynthesis; pyridoxine 5'-phosphate from D-erythrose 4-phosphate: step 3/5. In terms of biological role, catalyzes the reversible conversion of 3-phosphohydroxypyruvate to phosphoserine and of 3-hydroxy-2-oxo-4-phosphonooxybutanoate to phosphohydroxythreonine. The polypeptide is Phosphoserine aminotransferase (Desulfatibacillum aliphaticivorans).